The chain runs to 112 residues: uncharacterized protein (112 aa).

The segment covering 1-11 has biased composition (polar residues); sequence MAESVASSESL. The interval 1-32 is disordered; sequence MAESVASSESLPQMKPEEPESKKSPSREAIPK. Over residues 15–31 the composition is skewed to basic and acidic residues; it reads KPEEPESKKSPSREAIP. Residues 81–101 traverse the membrane as a helical segment; sequence VVFIFMIAIMSMLVIGLVVCG.

Its subcellular location is the membrane. This is an uncharacterized protein from Encephalitozoon cuniculi (strain GB-M1) (Microsporidian parasite).